Consider the following 404-residue polypeptide: Multidrug resistance protein MdtG (404 aa).

A run of 11 helical transmembrane segments spans residues Leu19–Val39, Leu56–Ala76, Leu90–Ile110, Ala113–Val133, Gly149–Leu169, Pro171–Ile191, Leu222–Leu242, Ile254–Pro274, Ile288–Thr308, Phe317–Asn337, and Ala376–Leu396.

It belongs to the major facilitator superfamily. DHA1 family. MdtG (TC 2.A.1.2.20) subfamily.

The protein localises to the cell inner membrane. This chain is Multidrug resistance protein MdtG, found in Salmonella paratyphi C (strain RKS4594).